The sequence spans 214 residues: Cell division protein SepF (214 aa).

The interval E25–G51 is disordered.

Belongs to the SepF family. In terms of assembly, homodimer. Interacts with FtsZ.

It localises to the cytoplasm. Cell division protein that is part of the divisome complex and is recruited early to the Z-ring. Probably stimulates Z-ring formation, perhaps through the cross-linking of FtsZ protofilaments. Its function overlaps with FtsA. In Mycolicibacterium smegmatis (strain ATCC 700084 / mc(2)155) (Mycobacterium smegmatis), this protein is Cell division protein SepF.